A 402-amino-acid polypeptide reads, in one-letter code: Exodeoxyribonuclease 7 large subunit (402 aa).

It belongs to the XseA family. As to quaternary structure, heterooligomer composed of large and small subunits.

It is found in the cytoplasm. It carries out the reaction Exonucleolytic cleavage in either 5'- to 3'- or 3'- to 5'-direction to yield nucleoside 5'-phosphates.. In terms of biological role, bidirectionally degrades single-stranded DNA into large acid-insoluble oligonucleotides, which are then degraded further into small acid-soluble oligonucleotides. This Streptomyces coelicolor (strain ATCC BAA-471 / A3(2) / M145) protein is Exodeoxyribonuclease 7 large subunit.